Reading from the N-terminus, the 482-residue chain is UDP-N-acetylmuramoyl-L-alanyl-D-glutamate--2,6-diaminopimelate ligase (482 aa).

Position 24 (S24) interacts with UDP-N-acetyl-alpha-D-muramoyl-L-alanyl-D-glutamate. 105–111 (GTNGKTT) provides a ligand contact to ATP. UDP-N-acetyl-alpha-D-muramoyl-L-alanyl-D-glutamate contacts are provided by residues 147–148 (TT), S174, Q180, and R182. N6-carboxylysine is present on K214. Residues R378, 402–405 (DNPR), G453, and E457 each bind meso-2,6-diaminopimelate. The Meso-diaminopimelate recognition motif signature appears at 402-405 (DNPR).

This sequence belongs to the MurCDEF family. MurE subfamily. Mg(2+) is required as a cofactor. Post-translationally, carboxylation is probably crucial for Mg(2+) binding and, consequently, for the gamma-phosphate positioning of ATP.

It is found in the cytoplasm. The enzyme catalyses UDP-N-acetyl-alpha-D-muramoyl-L-alanyl-D-glutamate + meso-2,6-diaminopimelate + ATP = UDP-N-acetyl-alpha-D-muramoyl-L-alanyl-gamma-D-glutamyl-meso-2,6-diaminopimelate + ADP + phosphate + H(+). The protein operates within cell wall biogenesis; peptidoglycan biosynthesis. In terms of biological role, catalyzes the addition of meso-diaminopimelic acid to the nucleotide precursor UDP-N-acetylmuramoyl-L-alanyl-D-glutamate (UMAG) in the biosynthesis of bacterial cell-wall peptidoglycan. This is UDP-N-acetylmuramoyl-L-alanyl-D-glutamate--2,6-diaminopimelate ligase from Lawsonia intracellularis (strain PHE/MN1-00).